The following is a 284-amino-acid chain: L-ribulose-5-phosphate 3-epimerase UlaE (284 aa).

It belongs to the L-ribulose-5-phosphate 3-epimerase family.

It carries out the reaction L-ribulose 5-phosphate = L-xylulose 5-phosphate. It participates in cofactor degradation; L-ascorbate degradation; D-xylulose 5-phosphate from L-ascorbate: step 3/4. Its function is as follows. Catalyzes the isomerization of L-xylulose-5-phosphate to L-ribulose-5-phosphate. Is involved in the anaerobic L-ascorbate utilization. The sequence is that of L-ribulose-5-phosphate 3-epimerase UlaE from Escherichia coli O17:K52:H18 (strain UMN026 / ExPEC).